Consider the following 218-residue polypeptide: Small ribosomal subunit protein uS3c (218 aa).

The KH type-2 domain occupies 43-118 (IKNYVQKNTK…KFNIAITKIA (76 aa)).

The protein belongs to the universal ribosomal protein uS3 family. Part of the 30S ribosomal subunit.

Its subcellular location is the plastid. It localises to the chloroplast. In Coffea arabica (Arabian coffee), this protein is Small ribosomal subunit protein uS3c (rps3).